Here is an 815-residue protein sequence, read N- to C-terminus: MPTVISASVAPRTAAEPRSPGPVPHPAQSKATEAGGGNASGIYSAIISRNFPIIGVKEKTFEQLHKKCLEKKVLYVDPEFPPDETSLFYSQKFPIQFIWKRPPEICENPRFIIDGANRTDICQGDLGDCWFLAAIACLTLNQRLLFRVIPHDQSFIENYAGIFHFQFWRYGEWVDVVIDDCLPTYNNQLVFTKSNHRNEFWSALLEKAYAKLHGSYEALKGGNTTEAMEDFTGGVTEFFEIRDAPSDMHKIMKKAIERGSLMGCSIDDGTNMTYGTSPSGLNMGELIARMVRNMDNSLFRDSDLDPRASVERPTRTIVPVQYETRMACGLVRGHAYSVTGLDEVLFKGEKVKLVRLRNPWGQVEWNGSWSDGWKDWSFVDKDEKARLQHQVTEDGEFWMSYEDFIYHFTKLEICNLTADALQSDKLQTWTVSVNEGRWVRGCSAGGCRNFPDTFWTNPQYRLKLLEEDDDPDDSEVICSFLVALMQKNRRKDRKLGANLFTIGFAIYEVPKEMHGNRQHLQKDFFLYNASRARSKTYINMREVSQRFRLPPSEYVIVPSTYEPHQEGEFILRVFSEKRNLSEEVENTISVDRPVPIIFVSDRANSNKELGVDQESEEGKGKTSPDKQEQSPQPQPGSSDQESEEQQQFRNIFKQIAGDDMEICADELKKVLNTVVNKHKDLKTHGFTLESCRSMIALMDTDGSGKLNLQEFHHLWNKIKAWQKIFKHYDTDQSGTINSYEMRNAVNDAGFHLNNQLYDIITMRYADKHMNIDFDSFICCFVRLEGMFRAFHAFDKDGDGIIKLNVLEWLQLTMYA.

The tract at residues Ala-7–Gly-36 is disordered. Residues Leu-74 to Thr-417 form the Calpain catalytic domain. Active-site residues include Cys-129, His-334, and Asn-358. Residues Ala-418 to Asn-586 are domain III. The interval Thr-587 to Arg-649 is linker. The tract at residues Ser-605–Gln-646 is disordered. The span at Glu-616–Glu-628 shows a compositional bias: basic and acidic residues. Over residues Gln-629 to Asp-639 the composition is skewed to low complexity. EF-hand domains lie at Glu-643 to Lys-677, Phe-686 to Lys-719, Asn-716 to His-751, and Val-781 to Ala-815. The segment at Asn-650 to Ala-815 is domain IV. 18 residues coordinate Ca(2+): Ala-656, Asp-659, Glu-661, Glu-666, Asp-699, Asp-701, Ser-703, Lys-705, Glu-710, Asp-729, Asp-731, Ser-733, Thr-735, Glu-740, Asp-794, Asp-796, Asp-798, and Ile-800.

Belongs to the peptidase C2 family. In terms of assembly, homodimer; via EF-hand domain 4. Interacts with TTN/titin. Interacts with CMYA5; this interaction, which results in CMYA5 proteolysis, may protect CAPN3 from autolysis. Interacts with SIMC1. Interacts with UTP25; the interaction is required for CAPN3 translocation to the nucleolus.

The protein localises to the cytoplasm. It localises to the nucleus. The protein resides in the nucleolus. The catalysed reaction is Broad endopeptidase activity.. Its activity is regulated as follows. Activated by micromolar concentrations of calcium and inhibited by calpastatin. Functionally, calcium-regulated non-lysosomal thiol-protease. Proteolytically cleaves CTBP1. Mediates, with UTP25, the proteasome-independent degradation of p53/TP53. The polypeptide is Calpain-3 (CAPN3) (Macaca fascicularis (Crab-eating macaque)).